A 70-amino-acid chain; its full sequence is Large ribosomal subunit protein bL31 (70 aa).

Positions 16, 18, 37, and 40 each coordinate Zn(2+).

The protein belongs to the bacterial ribosomal protein bL31 family. Type A subfamily. Part of the 50S ribosomal subunit. Requires Zn(2+) as cofactor.

Its function is as follows. Binds the 23S rRNA. The polypeptide is Large ribosomal subunit protein bL31 (Pasteurella multocida (strain Pm70)).